Consider the following 1073-residue polypeptide: DNA-directed RNA polymerase subunit beta (1073 aa).

It belongs to the RNA polymerase beta chain family. In plastids the minimal PEP RNA polymerase catalytic core is composed of four subunits: alpha, beta, beta', and beta''. When a (nuclear-encoded) sigma factor is associated with the core the holoenzyme is formed, which can initiate transcription.

It is found in the plastid. It localises to the chloroplast. It catalyses the reaction RNA(n) + a ribonucleoside 5'-triphosphate = RNA(n+1) + diphosphate. In terms of biological role, DNA-dependent RNA polymerase catalyzes the transcription of DNA into RNA using the four ribonucleoside triphosphates as substrates. This Aethionema grandiflorum (Persian stone-cress) protein is DNA-directed RNA polymerase subunit beta.